The primary structure comprises 288 residues: 4-hydroxybenzoate octaprenyltransferase (288 aa).

8 helical membrane-spanning segments follow: residues 23–43, 46–66, 98–118, 141–161, 163–183, 213–233, 234–254, and 268–288; these read IGSL…GRGI, AKIL…GCVV, ILFV…NSMT, LPQV…FAAV, ESLP…TVAY, LIIG…GWLM, NLGG…THQQ, and AFLN…ISYW.

Belongs to the UbiA prenyltransferase family. Mg(2+) serves as cofactor.

It localises to the cell inner membrane. The catalysed reaction is all-trans-octaprenyl diphosphate + 4-hydroxybenzoate = 4-hydroxy-3-(all-trans-octaprenyl)benzoate + diphosphate. It functions in the pathway cofactor biosynthesis; ubiquinone biosynthesis. Catalyzes the prenylation of para-hydroxybenzoate (PHB) with an all-trans polyprenyl group. Mediates the second step in the final reaction sequence of ubiquinone-8 (UQ-8) biosynthesis, which is the condensation of the polyisoprenoid side chain with PHB, generating the first membrane-bound Q intermediate 3-octaprenyl-4-hydroxybenzoate. The polypeptide is 4-hydroxybenzoate octaprenyltransferase (Yersinia pseudotuberculosis serotype IB (strain PB1/+)).